The chain runs to 80 residues: RNA-binding protein KhpA (80 aa).

A KH domain is found at 33-80; it reads GRTVEVHVHPDDLGKVIGRGGRTATALRKLVAGIGGRGIRVDVVDTDQ.

The protein belongs to the KhpA RNA-binding protein family.

The protein resides in the cytoplasm. A probable RNA-binding protein. The polypeptide is RNA-binding protein KhpA (Mycobacterium leprae (strain TN)).